The sequence spans 121 residues: Large ribosomal subunit protein eL34A (121 aa).

Belongs to the eukaryotic ribosomal protein eL34 family. As to quaternary structure, component of the large ribosomal subunit (LSU). Mature yeast ribosomes consist of a small (40S) and a large (60S) subunit. The 40S small subunit contains 1 molecule of ribosomal RNA (18S rRNA) and 33 different proteins (encoded by 57 genes). The large 60S subunit contains 3 rRNA molecules (25S, 5.8S and 5S rRNA) and 46 different proteins (encoded by 81 genes).

It localises to the cytoplasm. In terms of biological role, component of the ribosome, a large ribonucleoprotein complex responsible for the synthesis of proteins in the cell. The small ribosomal subunit (SSU) binds messenger RNAs (mRNAs) and translates the encoded message by selecting cognate aminoacyl-transfer RNA (tRNA) molecules. The large subunit (LSU) contains the ribosomal catalytic site termed the peptidyl transferase center (PTC), which catalyzes the formation of peptide bonds, thereby polymerizing the amino acids delivered by tRNAs into a polypeptide chain. The nascent polypeptides leave the ribosome through a tunnel in the LSU and interact with protein factors that function in enzymatic processing, targeting, and the membrane insertion of nascent chains at the exit of the ribosomal tunnel. This chain is Large ribosomal subunit protein eL34A, found in Saccharomyces cerevisiae (strain ATCC 204508 / S288c) (Baker's yeast).